The following is a 283-amino-acid chain: Phosphatidylglycerol--prolipoprotein diacylglyceryl transferase (283 aa).

The next 7 helical transmembrane spans lie at 21-41 (LAIRWYGLMYLFGFMFALWLA), 60-80 (LLFAGFLGVVIGGRIGYVLFY), 95-115 (VWTGGMSFHGGLLGVISAMLW), 124-144 (FFTIADFVAPLVPFGLGAGRL), 176-196 (SQLYEFALEGIVLFLILNWFI), 203-223 (GAVSGLFLFGYGTFRFLVEYV), and 239-259 (MGQILSLPMVIGGLLMMVWAF). Arg143 provides a ligand contact to a 1,2-diacyl-sn-glycero-3-phospho-(1'-sn-glycerol).

The protein belongs to the Lgt family.

The protein resides in the cell inner membrane. The enzyme catalyses L-cysteinyl-[prolipoprotein] + a 1,2-diacyl-sn-glycero-3-phospho-(1'-sn-glycerol) = an S-1,2-diacyl-sn-glyceryl-L-cysteinyl-[prolipoprotein] + sn-glycerol 1-phosphate + H(+). It functions in the pathway protein modification; lipoprotein biosynthesis (diacylglyceryl transfer). Catalyzes the transfer of the diacylglyceryl group from phosphatidylglycerol to the sulfhydryl group of the N-terminal cysteine of a prolipoprotein, the first step in the formation of mature lipoproteins. The sequence is that of Phosphatidylglycerol--prolipoprotein diacylglyceryl transferase from Aliivibrio salmonicida (strain LFI1238) (Vibrio salmonicida (strain LFI1238)).